Consider the following 484-residue polypeptide: Glutamyl-tRNA(Gln) amidotransferase subunit A (484 aa).

Residues K78 and S153 each act as charge relay system in the active site. Catalysis depends on S177, which acts as the Acyl-ester intermediate.

This sequence belongs to the amidase family. GatA subfamily. In terms of assembly, heterotrimer of A, B and C subunits.

It carries out the reaction L-glutamyl-tRNA(Gln) + L-glutamine + ATP + H2O = L-glutaminyl-tRNA(Gln) + L-glutamate + ADP + phosphate + H(+). Functionally, allows the formation of correctly charged Gln-tRNA(Gln) through the transamidation of misacylated Glu-tRNA(Gln) in organisms which lack glutaminyl-tRNA synthetase. The reaction takes place in the presence of glutamine and ATP through an activated gamma-phospho-Glu-tRNA(Gln). The protein is Glutamyl-tRNA(Gln) amidotransferase subunit A of Thermodesulfovibrio yellowstonii (strain ATCC 51303 / DSM 11347 / YP87).